The primary structure comprises 70 residues: uncharacterized protein (70 aa).

This is an uncharacterized protein from Escherichia coli (strain K12).